The chain runs to 417 residues: Hydrogen cyanide synthase subunit HcnC (417 aa).

Positions 1–18 are cleaved as a signal peptide; that stretch reads MNRTYDIVIAGGGVIGAS. 7–21 contacts FAD; it reads IVIAGGGVIGASCAY. A lipid anchor (N-palmitoyl cysteine) is attached at cysteine 19. Cysteine 19 is lipidated: S-diacylglycerol cysteine. Residues 46 to 66 form a helical membrane-spanning segment; it reads SAGGLWAIGESVGLGCGVIFF.

It belongs to the FAD-dependent glycerol-3-phosphate dehydrogenase family. In terms of assembly, heterotrimer of HcnA, HcnB and HcnC. The cofactor is FAD.

The protein localises to the cell membrane. It catalyses the reaction glycine + 2 A = hydrogen cyanide + 2 AH2 + CO2. Its activity is regulated as follows. Oxygen is necessary for cyanogenesis. Activated by succinate, glycine methyl ester, glucose and D,L-methionine in addition to glycine. Phenazine methosulfate, methylene blue, 2,6-dichlorophenolindophenol (DCIP) and ferricyanide can replace oxygen for the reaction. Inhibited by pyrrolnitrin and acriflavine at 1 mM concentration. In terms of biological role, a three-component membrane-bound flavoenzyme that catalyzes the formation of hydrogen cyanide, a secondary metabolite, by transfer of electrons to a cyanide-resistant branch of the aerobic respiratory chain. In Pseudomonas aeruginosa (strain ATCC 15692 / DSM 22644 / CIP 104116 / JCM 14847 / LMG 12228 / 1C / PRS 101 / PAO1), this protein is Hydrogen cyanide synthase subunit HcnC.